The sequence spans 79 residues: DNA gyrase inhibitor YacG (79 aa).

The Zn(2+) site is built by Cys7, Cys10, Cys26, and Cys30.

It belongs to the DNA gyrase inhibitor YacG family. In terms of assembly, interacts with GyrB. Zn(2+) serves as cofactor.

Functionally, inhibits all the catalytic activities of DNA gyrase by preventing its interaction with DNA. Acts by binding directly to the C-terminal domain of GyrB, which probably disrupts DNA binding by the gyrase. This chain is DNA gyrase inhibitor YacG, found in Shewanella pealeana (strain ATCC 700345 / ANG-SQ1).